Consider the following 57-residue polypeptide: Myrmicitoxin(1)-Pm7a (57 aa).

Positions 1–23 (MMKIIYAFLLIAVVAFMGSGIMA) are cleaved as a signal peptide. The propeptide occupies 24 to 31 (EPLAEAIA).

This sequence belongs to the formicidae venom clade 4 family. As to expression, expressed by the venom gland.

The protein localises to the secreted. In terms of biological role, probable neurotoxin. This is Myrmicitoxin(1)-Pm7a from Pogonomyrmex maricopa (Maricopa harvester ant).